A 172-amino-acid chain; its full sequence is Transcription factor MafF (172 aa).

The tract at residues 51–76 (RLKQRRRTLKNRGYAASCRVKRVCQK) is basic motif. A bZIP domain is found at 51 to 114 (RLKQRRRTLK…DALRGKCEAL (64 aa)). Residues 79-93 (LQKQKSELEREVDKL) are leucine-zipper. Residues 140–172 (VKSAPSPGPGPAPGPGPASGPGPAPGPAPAACS) form a disordered region. The span at 145 to 172 (SPGPGPAPGPGPASGPGPAPGPAPAACS) shows a compositional bias: pro residues.

Belongs to the bZIP family. Maf subfamily. As to quaternary structure, monomer and homo- or heterodimer. Interacts with MIP. Forms high affinity heterodimers with members of the CNC-bZIP family such as NFE2L1/NRF1.

It is found in the nucleus. Since they lack a putative transactivation domain, the small Mafs behave as transcriptional repressors when they dimerize among themselves. However, they seem to serve as transcriptional activators by dimerizing with other (usually larger) basic-zipper proteins, such as NFE2L1/NRF1, and recruiting them to specific DNA-binding sites. Interacts with the upstream promoter region of the oxytocin receptor gene. May be a transcriptional enhancer in the up-regulation of the oxytocin receptor gene at parturition. The sequence is that of Transcription factor MafF (MAFF) from Bos taurus (Bovine).